A 1057-amino-acid polypeptide reads, in one-letter code: Collagen alpha-1(I) chain (1057 aa).

Gln1 is subject to Pyrrolidone carboxylic acid. Residues Gln1–Ser10 show a composition bias toward basic and acidic residues. The tract at residues Gln1 to Pro17 is nonhelical region (N-terminal). The segment at Gln1–Ala1057 is disordered. At Lys9 the chain carries Allysine. Ser10 is subject to Phosphoserine. Collagen-like domains lie at Gly18–Lys76, Gly75–Asn134, Gly135–Glu193, and Gly195–Gly252. Residues Gly18 to Pro1031 are triple-helical region. 4-hydroxyproline is present on residues Pro29, Pro32, Pro35, Pro44, Pro47, Pro50, Pro65, Pro80, Pro86, Pro95, and Pro101. The span at Pro37–Met56 shows a compositional bias: low complexity. The segment covering Asn68 to Glu82 has biased composition (basic and acidic residues). Lys104 bears the 5-hydroxylysine; alternate mark. Lys104 is a glycosylation site (O-linked (Gal...) hydroxylysine; alternate). A Phosphoserine modification is found at Ser110. Over residues Asp118–Asn134 the composition is skewed to low complexity. Pro128, Pro131, Pro137, Pro146, and Pro152 each carry 4-hydroxyproline. Residues Pro157–Ala170 show a composition bias toward low complexity. The segment covering Pro172–Phe184 has biased composition (pro residues). A 4-hydroxyproline mark is found at Pro173, Pro182, Pro185, Pro212, Pro215, Pro227, Pro233, Pro242, Pro248, Pro251, and Pro266. The span at Ala218 to Lys269 shows a compositional bias: low complexity. Lys269 bears the 5-hydroxylysine mark. 10 positions are modified to 4-hydroxyproline: Pro275, Pro278, Pro290, Pro292, Pro299, Pro314, Pro320, Pro323, Pro329, and Pro335. The span at Lys287–Gln296 shows a compositional bias: low complexity. The span at Gly324 to Gly333 shows a compositional bias: gly residues. Lys344 carries the post-translational modification 5-hydroxylysine. Pro353, Pro362, Pro368, Pro374, Pro383, Pro386, Pro395, Pro404, Pro410, Pro422, Pro431, Pro440, Pro443, Pro461, Pro479, Pro485, Pro491, Pro497, Pro503, Pro509, Pro521, Pro530, Pro542, Pro554, Pro557, Pro563, Pro569, and Pro578 each carry 4-hydroxyproline. A compositionally biased stretch (low complexity) spans Lys377–Arg403. Residues Ala412 to Pro431 are compositionally biased toward low complexity. Positions Gln473–Gln500 are enriched in low complexity. Collagen-like domains follow at residues Gly522–Gly579 and Gly555–Pro613. The span at Asn539 to Gln566 shows a compositional bias: low complexity. Lys590 is modified (5-hydroxylysine). 3 positions are modified to 4-hydroxyproline: Pro596, Pro611, and Pro617. Collagen-like domains follow at residues Gly618–Asp676 and Gly678–Pro736. Over residues Ala623–Ala637 the composition is skewed to low complexity. Ser626 bears the Phosphoserine mark. Pro638, Pro644, Pro647, Pro656, Pro662, Pro680, Pro689, and Pro698 each carry 4-hydroxyproline. Low complexity predominate over residues Ala650 to Ala677. At Lys701 the chain carries 5-hydroxylysine. The span at Ser706–Val722 shows a compositional bias: low complexity. 2 positions are modified to 4-hydroxyproline: Pro710 and Pro716. At Pro724 the chain carries 3-hydroxyproline. 4-hydroxyproline occurs at positions 725, 734, 737, 758, 764, 767, 776, and 785. A compositionally biased stretch (low complexity) spans Glu751–Glu760. Positions Ala770 to Pro785 are enriched in low complexity. A compositionally biased stretch (gly residues) spans Gly789–Gly798. 4-hydroxyproline occurs at positions 803, 812, 815, 821, 836, 842, 848, 857, 863, and 869. In terms of domain architecture, Collagen-like 9 spans Gly804–Gly861. The segment covering Pro835 to Ala845 has biased composition (pro residues). Residue Lys872 is modified to 5-hydroxylysine. Positions Ser881 to Val896 are enriched in pro residues. 4-hydroxyproline is present on residues Pro884, Pro887, and Pro890. A compositionally biased stretch (low complexity) spans Ala917–Pro931. Collagen-like domains are found at residues Gly918–Pro976 and Gly972–Pro1030. Over residues Arg932–Leu946 the composition is skewed to basic and acidic residues. Lys935 is subject to 5-hydroxylysine. Lys947 carries the post-translational modification 5-hydroxylysine; alternate. The O-linked (Gal...) hydroxylysine; alternate glycan is linked to Lys947. Residues Pro959, Pro962, Pro965, Pro983, Pro998, and Pro1001 each carry the 4-hydroxyproline modification. Over residues Pro965–Leu997 the composition is skewed to low complexity. Pro1003 bears the 3-hydroxyproline mark. The residue at position 1004 (Pro1004) is a 4-hydroxyproline. Positions Val1016–Pro1031 are enriched in pro residues. Pro1018 is modified (3-hydroxyproline). The residue at position 1019 (Pro1019) is a 4-hydroxyproline. Pro1021 is modified (3-hydroxyproline). 4-hydroxyproline is present on Pro1022. Pro1024 carries the post-translational modification 3-hydroxyproline. Pro1025, Pro1028, and Pro1031 each carry 4-hydroxyproline. Residues Ser1032–Tyr1055 are nonhelical region (C-terminal). Basic and acidic residues predominate over residues Glu1046–Ala1057. Lys1047 bears the Allysine mark.

The protein belongs to the fibrillar collagen family. Trimers of one alpha 2(I) and two alpha 1(I) chains. Post-translationally, contains mostly 4-hydroxyproline. Proline residues at the third position of the tripeptide repeating unit (G-X-Y) are hydroxylated in some or all of the chains. Contains 3-hydroxyproline at a few sites. This modification occurs on the first proline residue in the sequence motif Gly-Pro-Hyp, where Hyp is 4-hydroxyproline. In terms of processing, lysine residues at the third position of the tripeptide repeating unit (G-X-Y) are 5-hydroxylated in some or all of the chains. Post-translationally, O-glycosylated on hydroxylated lysine residues. The O-linked glycan consists of a Glc-Gal disaccharide.

The protein resides in the secreted. The protein localises to the extracellular space. It localises to the extracellular matrix. In terms of biological role, type I collagen is a member of group I collagen (fibrillar forming collagen). The polypeptide is Collagen alpha-1(I) chain (COL1A1) (Mammut americanum (American mastodon)).